The following is a 273-amino-acid chain: Bis(5'-nucleosyl)-tetraphosphatase, symmetrical (273 aa).

It belongs to the Ap4A hydrolase family.

It catalyses the reaction P(1),P(4)-bis(5'-adenosyl) tetraphosphate + H2O = 2 ADP + 2 H(+). In terms of biological role, hydrolyzes diadenosine 5',5'''-P1,P4-tetraphosphate to yield ADP. The chain is Bis(5'-nucleosyl)-tetraphosphatase, symmetrical from Aeromonas hydrophila subsp. hydrophila (strain ATCC 7966 / DSM 30187 / BCRC 13018 / CCUG 14551 / JCM 1027 / KCTC 2358 / NCIMB 9240 / NCTC 8049).